The sequence spans 236 residues: Small ribosomal subunit protein uS3 (236 aa).

Residues 39–107 (IRKFLKKELY…EISINIKEVK (69 aa)) form the KH type-2 domain. The segment covering 213–229 (QPEKKEEAPARDKEGRG) has biased composition (basic and acidic residues). Positions 213–236 (QPEKKEEAPARDKEGRGTRRRGRQ) are disordered.

The protein belongs to the universal ribosomal protein uS3 family. In terms of assembly, part of the 30S ribosomal subunit. Forms a tight complex with proteins S10 and S14.

Its function is as follows. Binds the lower part of the 30S subunit head. Binds mRNA in the 70S ribosome, positioning it for translation. This Wolinella succinogenes (strain ATCC 29543 / DSM 1740 / CCUG 13145 / JCM 31913 / LMG 7466 / NCTC 11488 / FDC 602W) (Vibrio succinogenes) protein is Small ribosomal subunit protein uS3.